Reading from the N-terminus, the 669-residue chain is Matrix metalloproteinase-15 (669 aa).

The or 45 signal peptide spans 1-41; it reads MGSDPSAPGRPGWTGSLLGDREEAARPRLLPLLLVLLGCLG. The propeptide occupies 42-131; the sequence is LGVAAEDAEV…KANLRRRRKR (90 aa). The Cysteine switch motif lies at 109-116; it reads PRCGVPDQ. Cysteine 111 contacts Zn(2+). Residues 132 to 625 are Extracellular-facing; it reads YALTGRKWNN…QMEEVARTVN (494 aa). Asparagine 150 carries an N-linked (GlcNAc...) asparagine glycan. Histidine 259 contributes to the Zn(2+) binding site. Glutamate 260 is a catalytic residue. Zn(2+)-binding residues include histidine 263 and histidine 269. A disordered region spans residues 300–370; that stretch reads QQLYGTPDGQ…RPDQYGPNIC (71 aa). The span at 305 to 322 shows a compositional bias: low complexity; the sequence is TPDGQPQPTQPLPTVTPR. Over residues 333–342 the composition is skewed to pro residues; that stretch reads RPPQPPPPGG. Hemopexin repeat units follow at residues 367–415, 416–461, 463–511, and 512–559; these read PNIC…WRGL, PGDI…GLGI, YDRI…QGIP, and ASPK…FMGC. Cysteines 370 and 559 form a disulfide. Residues 574–593 form a disordered region; it reads RPPFNPHGGAEPGADSAEGD. Serine 589 bears the Phosphoserine mark. A helical transmembrane segment spans residues 626–646; it reads VVMVLVPLLLLLCVLGLTYAL. Topologically, residues 647–669 are cytoplasmic; sequence VQMQRKGAPRVLLYCKRSLQEWV.

The protein belongs to the peptidase M10A family. Zn(2+) serves as cofactor. Requires Ca(2+) as cofactor. In terms of processing, the precursor is cleaved by a furin endopeptidase. In terms of tissue distribution, appeared to be synthesized preferentially in liver, placenta, testis, colon and intestine. Substantial amounts are also detected in pancreas, kidney, lung, heart and skeletal muscle.

It is found in the membrane. Its function is as follows. Endopeptidase that degrades various components of the extracellular matrix. May activate progelatinase A. The chain is Matrix metalloproteinase-15 (MMP15) from Homo sapiens (Human).